The primary structure comprises 873 residues: Sine oculis-binding protein homolog (873 aa).

Residues 1–14 (MAEMEKEGRPPENK) are compositionally biased toward basic and acidic residues. Residues 1–26 (MAEMEKEGRPPENKRSRKPAHPVKRE) form a disordered region. 2 consecutive FCS-type zinc fingers follow at residues 142–180 (DDVS…KCFA) and 216–256 (FKNN…KCLN). Disordered regions lie at residues 308 to 339 (RRKA…DTAN), 413 to 484 (RGPP…PGAP), and 550 to 646 (KPPN…PGVL). Residues 318-339 (AGQSQGPGPSASTTVSPSDTAN) show a composition bias toward polar residues. Residues 417–433 (HHASNPNSPLSNPMLPG) are compositionally biased toward low complexity. The segment covering 460 to 484 (IHPPSTPTMPGNPPGLLPPPPPGAP) has biased composition (pro residues). Positions 614–625 (EHGRSEVVDLTR) are enriched in basic and acidic residues. The SUMO interaction motif 1 (SIM); mediates the binding to polysumoylated substrates motif lies at 620–624 (VVDLT). Residue Ser629 is modified to Phosphoserine. An SUMO interaction motif 2 (SIM); mediates the binding to polysumoylated substrates motif is present at residues 653-657 (VIDLT). Lys677 is covalently cross-linked (Glycyl lysine isopeptide (Lys-Gly) (interchain with G-Cter in SUMO2)). Position 699 is a phosphoserine (Ser699). Residues 730 to 771 (AAAEGAKSAEPPPEQPPPPPPPAPPKKLLSPEEPAVSELESV) are disordered. Residues 739 to 754 (EPPPEQPPPPPPPAPP) are compositionally biased toward pro residues.

It belongs to the SOBP family. Interacts (via SIM domains) with SUMO1 and SUMO2.

Implicated in development of the cochlea. This chain is Sine oculis-binding protein homolog, found in Homo sapiens (Human).